We begin with the raw amino-acid sequence, 179 residues long: Large ribosomal subunit protein uL6 (179 aa).

It belongs to the universal ribosomal protein uL6 family. Part of the 50S ribosomal subunit.

Functionally, this protein binds to the 23S rRNA, and is important in its secondary structure. It is located near the subunit interface in the base of the L7/L12 stalk, and near the tRNA binding site of the peptidyltransferase center. This Syntrophobacter fumaroxidans (strain DSM 10017 / MPOB) protein is Large ribosomal subunit protein uL6.